A 219-amino-acid chain; its full sequence is Octanoyltransferase (219 aa).

Residues 32-207 form the BPL/LPL catalytic domain; that stretch reads ENSQDEIWIV…TLSQELGLDK (176 aa). Substrate contacts are provided by residues 71 to 78, 138 to 140, and 151 to 153; these read RGGQVTYH, SLG, and GLA. Cys169 acts as the Acyl-thioester intermediate in catalysis.

This sequence belongs to the LipB family.

The protein resides in the cytoplasm. It catalyses the reaction octanoyl-[ACP] + L-lysyl-[protein] = N(6)-octanoyl-L-lysyl-[protein] + holo-[ACP] + H(+). Its pathway is protein modification; protein lipoylation via endogenous pathway; protein N(6)-(lipoyl)lysine from octanoyl-[acyl-carrier-protein]: step 1/2. Catalyzes the transfer of endogenously produced octanoic acid from octanoyl-acyl-carrier-protein onto the lipoyl domains of lipoate-dependent enzymes. Lipoyl-ACP can also act as a substrate although octanoyl-ACP is likely to be the physiological substrate. The protein is Octanoyltransferase of Shewanella halifaxensis (strain HAW-EB4).